We begin with the raw amino-acid sequence, 318 residues long: C1GALT1-specific chaperone 1 (318 aa).

Topologically, residues 1–6 (MLSESS) are cytoplasmic. The chain crosses the membrane as a helical; Signal-anchor for type II membrane protein span at residues 7–26 (SFLKGVMLGSIFCALITMLG). At 27–318 (HIRIGHGNRM…FLPPNGSDND (292 aa)) the chain is on the lumenal side.

The protein belongs to the glycosyltransferase 31 family. Beta3-Gal-T subfamily. As to quaternary structure, associates with core 1 beta-3-galactosyltransferase (C1GALT1), probably not with the soluble active form. Ubiquitously expressed. Abundantly expressed in salivary gland, stomach, small intestine, kidney, and testis and at intermediate levels in whole brain, cerebellum, spinal cord, thymus, spleen, trachea, lung, pancreas, ovary, and uterus.

It is found in the membrane. Probable chaperone required for the generation of 1 O-glycan Gal-beta1-3GalNAc-alpha1-Ser/Thr (T antigen), which is a precursor for many extended O-glycans in glycoproteins. Probably acts as a specific molecular chaperone assisting the folding/stability of core 1 beta-3-galactosyltransferase (C1GALT1). This is C1GALT1-specific chaperone 1 (C1GALT1C1) from Homo sapiens (Human).